The chain runs to 732 residues: Catalase-peroxidase (732 aa).

The segment at 1 to 24 (MDAKTDDNSAGKCPVAHGSAGRTN) is disordered. The segment at residues 96 to 219 (WHSAGTYRIA…LGAVQMGLIY (124 aa)) is a cross-link (tryptophyl-tyrosyl-methioninium (Trp-Tyr) (with M-245)). Catalysis depends on histidine 97, which acts as the Proton acceptor. Positions 219 to 245 (YVNPEGPNGNPDPLAAARDIRDTFARM) form a cross-link, tryptophyl-tyrosyl-methioninium (Tyr-Met) (with W-96). Histidine 260 is a heme b binding site.

It belongs to the peroxidase family. Peroxidase/catalase subfamily. In terms of assembly, homodimer or homotetramer. The cofactor is heme b. Post-translationally, formation of the three residue Trp-Tyr-Met cross-link is important for the catalase, but not the peroxidase activity of the enzyme.

It carries out the reaction H2O2 + AH2 = A + 2 H2O. The enzyme catalyses 2 H2O2 = O2 + 2 H2O. In terms of biological role, bifunctional enzyme with both catalase and broad-spectrum peroxidase activity. This chain is Catalase-peroxidase, found in Mesorhizobium japonicum (strain LMG 29417 / CECT 9101 / MAFF 303099) (Mesorhizobium loti (strain MAFF 303099)).